The primary structure comprises 337 residues: Phosphate acyltransferase (337 aa).

This sequence belongs to the PlsX family. Homodimer. Probably interacts with PlsY.

The protein localises to the cytoplasm. The catalysed reaction is a fatty acyl-[ACP] + phosphate = an acyl phosphate + holo-[ACP]. The protein operates within lipid metabolism; phospholipid metabolism. Functionally, catalyzes the reversible formation of acyl-phosphate (acyl-PO(4)) from acyl-[acyl-carrier-protein] (acyl-ACP). This enzyme utilizes acyl-ACP as fatty acyl donor, but not acyl-CoA. This Polynucleobacter necessarius subsp. necessarius (strain STIR1) protein is Phosphate acyltransferase.